Here is a 116-residue protein sequence, read N- to C-terminus: MSRSSIGPELEVNSKPLKGPIICPIRTYYSKVPLELLFPTTDRRFYFLKSYVFCSANSVPLYLLLLTSALHFNSYILLFDFQLKSKLLAYKRRARCVAGLLKSMERYPESTVTAMI.

The helical transmembrane segment at 52 to 72 threads the bilayer; that stretch reads VFCSANSVPLYLLLLTSALHF.

The protein resides in the mitochondrion membrane. This is an uncharacterized protein from Arabidopsis thaliana (Mouse-ear cress).